The sequence spans 206 residues: Protein Nef (206 aa).

G2 is lipidated: N-myristoyl glycine; by host. At S6 the chain carries Phosphoserine; by host. Positions 62-65 (QNEE) are acidic; interacts with host PACS1 and PACS2; stabilizes the interaction of NEF/MHC-I with host AP1M1; necessary for MHC-I internalization. An SH3-binding; interaction with Src family tyrosine kinases region spans residues 69–78 (PVRPQVPLRP). The PxxP; stabilizes the interaction of NEF/MHC-I with host AP1M1; necessary for MHC-I internalization motif lies at 72-75 (PQVP). Residues 108-124 (EILDLWVYHTQGFFPDW) form a mediates dimerization, Nef-PTE1 interaction region. The segment at 148–180 (LEPEEVERANEGDNNILLHPICQHGQEDEAREV) is binding to ATP6V1H. The Dileucine internalization motif; necessary for CD4 internalization signature appears at 164 to 165 (LL). The Diacidic; necessary for CD4 internalization signature appears at 174 to 175 (ED).

This sequence belongs to the lentivirus primate group Nef protein family. As to quaternary structure, monomer; cytosolic form. Homodimer; membrane bound form. Interacts with Nef associated p21-activated kinase (PAK2); this interaction activates PAK2. Associates with the Nef-MHC-I-AP1 complex; this complex is required for MHC-I internalization. Interacts (via C-terminus) with host PI3-kinase. Interacts with host PACS1; this interaction seems to be weak. Interacts with host PACS2. Interacts with host LCK and MAPK3; these interactions inhibit the kinase activity of the latter. Interacts with host ATP6V1H; this interaction may play a role in CD4 endocytosis. Associates with the CD4-Nef-AP2 complex; this complex is required for CD4 internalization. Interacts with host AP2 subunit alpha and AP2 subunit sigma2. Interacts with TCR-zeta chain; this interaction up-regulates the Fas ligand (FasL) surface expression. Interacts with host HCK, LYN, and SRC; these interactions activate the Src family kinases. Interacts with MAP3K5; this interaction inhibits the Fas and TNFR-mediated death signals. Interacts with beta-COP and PTE1. Interacts with human RACK1; this increases Nef phosphorylation by PKC. Interacts with TP53; this interaction decreases the half-life of TP53, protecting the infected cell against p53-mediated apoptosis. In terms of processing, the virion-associated Nef proteins are cleaved by the viral protease to release the soluble C-terminal core protein. Nef is probably cleaved concomitantly with viral structural proteins on maturation of virus particles. Post-translationally, myristoylated. Phosphorylated on serine residues, probably by host PKCdelta and theta.

It is found in the host cell membrane. The protein localises to the virion. The protein resides in the secreted. Its subcellular location is the host Golgi apparatus membrane. Its function is as follows. Factor of infectivity and pathogenicity, required for optimal virus replication. Alters numerous pathways of T-lymphocyte function and down-regulates immunity surface molecules in order to evade host defense and increase viral infectivity. Alters the functionality of other immunity cells, like dendritic cells, monocytes/macrophages and NK cells. Functionally, in infected CD4(+) T-lymphocytes, down-regulates the surface MHC-I, mature MHC-II, CD4, CD28, CCR5 and CXCR4 molecules. Mediates internalization and degradation of host CD4 through the interaction of with the cytoplasmic tail of CD4, the recruitment of AP-2 (clathrin adapter protein complex 2), internalization through clathrin coated pits, and subsequent transport to endosomes and lysosomes for degradation. Diverts host MHC-I molecules to the trans-Golgi network-associated endosomal compartments by an endocytic pathway to finally target them for degradation. MHC-I down-regulation may involve AP-1 (clathrin adapter protein complex 1) or possibly Src family kinase-ZAP70/Syk-PI3K cascade recruited by PACS2. In consequence infected cells are masked for immune recognition by cytotoxic T-lymphocytes. Decreasing the number of immune receptors also prevents reinfection by more HIV particles (superinfection). Down-regulates host SERINC3 and SERINC5 thereby excluding these proteins from the viral particles. Virion infectivity is drastically higher when SERINC3 or SERINC5 are excluded from the viral envelope, because these host antiviral proteins impair the membrane fusion event necessary for subsequent virion penetration. In terms of biological role, bypasses host T-cell signaling by inducing a transcriptional program nearly identical to that of anti-CD3 cell activation. Interaction with TCR-zeta chain up-regulates the Fas ligand (FasL). Increasing surface FasL molecules and decreasing surface MHC-I molecules on infected CD4(+) cells send attacking cytotoxic CD8+ T-lymphocytes into apoptosis. Plays a role in optimizing the host cell environment for viral replication without causing cell death by apoptosis. Protects the infected cells from apoptosis in order to keep them alive until the next virus generation is ready to strike. Inhibits the Fas and TNFR-mediated death signals by blocking MAP3K5/ASK1. Decreases the half-life of TP53, protecting the infected cell against p53-mediated apoptosis. Inhibits the apoptotic signals regulated by the Bcl-2 family proteins through the formation of a Nef/PI3-kinase/PAK2 complex that leads to activation of PAK2 and induces phosphorylation of host BAD. Its function is as follows. Extracellular Nef protein targets CD4(+) T-lymphocytes for apoptosis by interacting with CXCR4 surface receptors. In Simian immunodeficiency virus (isolate MB66) (SIV-cpz), this protein is Protein Nef.